The chain runs to 145 residues: D-aminoacyl-tRNA deacylase (145 aa).

A Gly-cisPro motif, important for rejection of L-amino acids motif is present at residues glycine 137–proline 138.

Belongs to the DTD family. In terms of assembly, homodimer.

The protein resides in the cytoplasm. The enzyme catalyses glycyl-tRNA(Ala) + H2O = tRNA(Ala) + glycine + H(+). It carries out the reaction a D-aminoacyl-tRNA + H2O = a tRNA + a D-alpha-amino acid + H(+). In terms of biological role, an aminoacyl-tRNA editing enzyme that deacylates mischarged D-aminoacyl-tRNAs. Also deacylates mischarged glycyl-tRNA(Ala), protecting cells against glycine mischarging by AlaRS. Acts via tRNA-based rather than protein-based catalysis; rejects L-amino acids rather than detecting D-amino acids in the active site. By recycling D-aminoacyl-tRNA to D-amino acids and free tRNA molecules, this enzyme counteracts the toxicity associated with the formation of D-aminoacyl-tRNA entities in vivo and helps enforce protein L-homochirality. The polypeptide is D-aminoacyl-tRNA deacylase (Pseudomonas putida (strain GB-1)).